The sequence spans 205 residues: HTH-type transcriptional regulator PksA (205 aa).

The HTH tetR-type domain occupies 8-68 (EKRRKQIAEA…FAMKLVQEKV (61 aa)). The H-T-H motif DNA-binding region spans 31 to 50 (SARNIAKEAGLSLGALRHYF).

Transcriptional regulation of the polyketide synthase operon. This chain is HTH-type transcriptional regulator PksA (pksA), found in Bacillus subtilis (strain 168).